The sequence spans 446 residues: Glucarate dehydratase-related protein (446 aa).

Substrate is bound by residues His31, Thr104, Tyr149, and Lys204. Lys206 serves as the catalytic Proton acceptor. Mg(2+)-binding residues include Asp234, Glu265, and Asn288. 234–236 is a substrate binding site; it reads DPN. Substrate is bound by residues Asn288, 338 to 340, His367, and Arg421; that span reads HSN. His338 acts as the Proton acceptor in catalysis.

It belongs to the mandelate racemase/muconate lactonizing enzyme family. GlucD subfamily. A divalent metal cation is required as a cofactor.

Its function is as follows. Does not seem to have an in-vivo activity on glucarate or idarate. Its real substrate is unknown. The polypeptide is Glucarate dehydratase-related protein (gudX) (Escherichia coli (strain K12)).